A 342-amino-acid chain; its full sequence is Ketol-acid reductoisomerase (NADP(+)) (342 aa).

The 180-residue stretch at 2–181 (VKVYYNGDIK…GGARAGVLET (180 aa)) folds into the KARI N-terminal Rossmann domain. NADP(+) is bound by residues 25 to 28 (YGSQ), arginine 48, serine 52, and 82 to 85 (DEQQ). The active site involves histidine 107. Residue glycine 133 coordinates NADP(+). Residues 182–327 (TFKEETETDL…RKLREMMPFV (146 aa)) form the KARI C-terminal knotted domain. Mg(2+) is bound by residues aspartate 190, glutamate 194, glutamate 226, and glutamate 230. Position 251 (serine 251) interacts with substrate.

This sequence belongs to the ketol-acid reductoisomerase family. The cofactor is Mg(2+).

The catalysed reaction is (2R)-2,3-dihydroxy-3-methylbutanoate + NADP(+) = (2S)-2-acetolactate + NADPH + H(+). It carries out the reaction (2R,3R)-2,3-dihydroxy-3-methylpentanoate + NADP(+) = (S)-2-ethyl-2-hydroxy-3-oxobutanoate + NADPH + H(+). It functions in the pathway amino-acid biosynthesis; L-isoleucine biosynthesis; L-isoleucine from 2-oxobutanoate: step 2/4. Its pathway is amino-acid biosynthesis; L-valine biosynthesis; L-valine from pyruvate: step 2/4. Functionally, involved in the biosynthesis of branched-chain amino acids (BCAA). Catalyzes an alkyl-migration followed by a ketol-acid reduction of (S)-2-acetolactate (S2AL) to yield (R)-2,3-dihydroxy-isovalerate. In the isomerase reaction, S2AL is rearranged via a Mg-dependent methyl migration to produce 3-hydroxy-3-methyl-2-ketobutyrate (HMKB). In the reductase reaction, this 2-ketoacid undergoes a metal-dependent reduction by NADPH to yield (R)-2,3-dihydroxy-isovalerate. The protein is Ketol-acid reductoisomerase (NADP(+)) of Bacillus subtilis (strain 168).